A 435-amino-acid chain; its full sequence is Glucan 1,3-beta-glucosidase (435 aa).

A signal peptide spans 1 to 30 (MLFPVLHLPKAMKFSSFSLIASSLLSLVAA). The Proton donor role is filled by Glu222. 2 disulfide bridges follow: Cys306-Cys432 and Cys331-Cys357. Glu323 (nucleophile) is an active-site residue.

This sequence belongs to the glycosyl hydrolase 5 (cellulase A) family.

It is found in the secreted. The enzyme catalyses Successive hydrolysis of beta-D-glucose units from the non-reducing ends of (1-&gt;3)-beta-D-glucans, releasing alpha-glucose.. Beta-glucanases participate in the metabolism of beta-glucan, the main structural component of the cell wall. It could also function biosynthetically as a transglycosylase. The chain is Glucan 1,3-beta-glucosidase from Pichia angusta (Yeast).